Consider the following 368-residue polypeptide: Cyclic di-GMP phosphodiesterase TM_0186 (368 aa).

The Response regulatory domain occupies 2-114; the sequence is TVLIVEDDDI…LLRLKITHAL (113 aa). Asp-49 bears the 4-aspartylphosphate mark. The 198-residue stretch at 148–345 folds into the HD-GYP domain; the sequence is YEDFLFEVLE…ITDVYRREKD (198 aa). Residues Glu-169, His-173, His-205, Asp-206, His-234, His-260, His-261, and Asp-289 each contribute to the a divalent metal cation site. The disordered stretch occupies residues 341–368; it reads RREKDEDTSHNGGRSHQSSPGEGVEGIR. Over residues 350–360 the composition is skewed to polar residues; the sequence is HNGGRSHQSSP.

It catalyses the reaction 3',3'-c-di-GMP + 2 H2O = 2 GMP + 2 H(+). Can function in vivo with either divalent iron or manganese occupying di- and trimetal sites. Dimetal is necessary and sufficient to catalyze conversion of c-di-GMP to pGpG, but conversion of pGpG to GMP requires an occupied trimetal site. Its function is as follows. Phosphodiesterase (PDE) that catalyzes the hydrolysis of cyclic diguanylate (c-di-GMP) to GMP. Hydrolyzes c-di-GMP to GMP in a two-step reaction, via the linear intermediate 5'-phosphoguanylyl(3'-&gt;5')guanosine (pGpG). The polypeptide is Cyclic di-GMP phosphodiesterase TM_0186 (Thermotoga maritima (strain ATCC 43589 / DSM 3109 / JCM 10099 / NBRC 100826 / MSB8)).